Consider the following 610-residue polypeptide: All-trans-retinol 13,14-reductase (610 aa).

The first 18 residues, 1–18 (MWLPLVLFLAVLLLAVVC), serve as a signal peptide directing secretion.

The protein belongs to the carotenoid/retinoid oxidoreductase family. CrtISO subfamily. NAD(+) is required as a cofactor. It depends on NADP(+) as a cofactor. FAD serves as cofactor.

Its subcellular location is the endoplasmic reticulum membrane. The enzyme catalyses all-trans-13,14-dihydroretinol + A = all-trans-retinol + AH2. Functionally, catalyzes the saturation of all-trans-retinol to all-trans-13,14-dihydroretinol. Does not exhibit any activity toward all-trans-retinoic acid, nor 9-cis, 11-cis or 13-cis-retinol isomers. May play a role in the metabolism of vitamin A. Independently of retinol conversion, may regulate liver metabolism upstream of MLXIPL/ChREBP. May play a role in adipocyte differentiation. The polypeptide is All-trans-retinol 13,14-reductase (RETSAT) (Macaca fascicularis (Crab-eating macaque)).